The chain runs to 415 residues: Histidine--tRNA ligase (415 aa).

Belongs to the class-II aminoacyl-tRNA synthetase family. In terms of assembly, homodimer.

The protein resides in the cytoplasm. It catalyses the reaction tRNA(His) + L-histidine + ATP = L-histidyl-tRNA(His) + AMP + diphosphate + H(+). This Gluconacetobacter diazotrophicus (strain ATCC 49037 / DSM 5601 / CCUG 37298 / CIP 103539 / LMG 7603 / PAl5) protein is Histidine--tRNA ligase.